A 734-amino-acid polypeptide reads, in one-letter code: Diacylglycerol kinase alpha (734 aa).

EF-hand domains are found at residues 109–144 and 154–189; these read RPEDKLEFTFKLYDTDRNGILDSSEVDRIIIQMMRM and ELRPILQEMMKEIDYDGSGSVSLAEWLRAGATTVPL. Residues aspartate 122, aspartate 124, asparagine 126, glutamate 133, aspartate 167, aspartate 169, serine 171, serine 173, and glutamate 178 each contribute to the Ca(2+) site. 2 consecutive Phorbol-ester/DAG-type zinc fingers follow at residues 204 to 252 and 268 to 318; these read QHMW…ALPC and SHVW…GHEC. In terms of domain architecture, DAGKc spans 371-505; that stretch reads SNTHPLLVFV…MDRWSVEVIP (135 aa). The residue at position 483 (lysine 483) is an N6-acetyllysine.

The protein belongs to the eukaryotic diacylglycerol kinase family. In terms of assembly, monomer.

It is found in the cytoplasm. Its subcellular location is the cytosol. It carries out the reaction a 1,2-diacyl-sn-glycerol + ATP = a 1,2-diacyl-sn-glycero-3-phosphate + ADP + H(+). It catalyses the reaction a 1-O-alkyl-sn-glycerol + ATP = a 1-O-alkyl-sn-glycero-3-phosphate + ADP + H(+). The catalysed reaction is 1-O-alkyl-2-acyl-sn-glycerol + ATP = 1-O-alkyl-2-acyl-sn-glycero-3-phosphate + ADP + H(+). The enzyme catalyses 1,2-dihexadecanoyl-sn-glycerol + ATP = 1,2-dihexadecanoyl-sn-glycero-3-phosphate + ADP + H(+). It carries out the reaction 1-hexadecanoyl-2-(9Z-octadecenoyl)-sn-glycerol + ATP = 1-hexadecanoyl-2-(9Z-octadecenoyl)-sn-glycero-3-phosphate + ADP + H(+). It catalyses the reaction 2-(9Z-octadecenoyl)-glycerol + ATP = 2-(9Z-octadecenoyl)-sn-glycero-3-phosphate + ADP + H(+). The catalysed reaction is 1,2-di-(9Z-octadecenoyl)-sn-glycerol + ATP = 1,2-di-(9Z-octadecenoyl)-sn-glycero-3-phosphate + ADP + H(+). The enzyme catalyses 1-octadecanoyl-2-(5Z,8Z,11Z,14Z-eicosatetraenoyl)-sn-glycerol + ATP = 1-octadecanoyl-2-(5Z,8Z,11Z,14Z-eicosatetraenoyl)-sn-glycero-3-phosphate + ADP + H(+). It carries out the reaction 1,2-didecanoyl-sn-glycerol + ATP = 1,2-didecanoyl-sn-glycero-3-phosphate + ADP + H(+). It catalyses the reaction 1-O-hexadecyl-2-acetyl-sn-glycerol + ATP = 1-O-hexadecyl-2-acetyl-sn-glycero-3-phosphate + ADP + H(+). The catalysed reaction is 1-O-hexadecyl-2-(5Z,8Z,11Z,14Z-eicosatetraenoyl)-sn-glycerol + ATP = 1-O-hexadecyl-2-(5Z,8Z,11Z,14Z-eicosatetraenoyl)-sn-glycero-3-phosphate + ADP + H(+). The enzyme catalyses 1-O-hexadecyl-2-(9Z-octadecenoyl)-sn-glycerol + ATP = 1-O-hexadecyl-2-(9Z-octadecenoyl)-sn-glycero-3-phosphate + ADP + H(+). It carries out the reaction 1-O-hexadecyl-sn-glycerol + ATP = 1-O-hexadecyl-sn-glycero-3-phosphate + ADP + H(+). The protein operates within lipid metabolism; glycerolipid metabolism. Stimulated by calcium and phosphatidylserine. Diacylglycerol kinase that converts diacylglycerol/DAG into phosphatidic acid/phosphatidate/PA and regulates the respective levels of these two bioactive lipids. Thereby, acts as a central switch between the signaling pathways activated by these second messengers with different cellular targets and opposite effects in numerous biological processes. Also plays an important role in the biosynthesis of complex lipids. Can also phosphorylate 1-alkyl-2-acylglycerol in vitro as efficiently as diacylglycerol provided it contains an arachidonoyl group. Also involved in the production of alkyl-lysophosphatidic acid, another bioactive lipid, through the phosphorylation of 1-alkyl-2-acetyl glycerol. This Bos taurus (Bovine) protein is Diacylglycerol kinase alpha (DGKA).